A 287-amino-acid chain; its full sequence is IQ domain-containing protein K (287 aa).

This is IQ domain-containing protein K (IQCK) from Homo sapiens (Human).